Here is a 185-residue protein sequence, read N- to C-terminus: Elongation factor P (185 aa).

The protein belongs to the elongation factor P family.

The protein resides in the cytoplasm. The protein operates within protein biosynthesis; polypeptide chain elongation. Involved in peptide bond synthesis. Stimulates efficient translation and peptide-bond synthesis on native or reconstituted 70S ribosomes in vitro. Probably functions indirectly by altering the affinity of the ribosome for aminoacyl-tRNA, thus increasing their reactivity as acceptors for peptidyl transferase. This chain is Elongation factor P, found in Symbiobacterium thermophilum (strain DSM 24528 / JCM 14929 / IAM 14863 / T).